Consider the following 300-residue polypeptide: NADH-cytochrome b5 reductase 2 (300 aa).

A helical membrane pass occupies residues 12–29; it reads FVYPLVGATIGSIGLAYY. The FAD-binding FR-type domain maps to 49-153; it reads DQWIDLKLKK…KGPVVKWKWE (105 aa). Residue 156–191 participates in FAD binding; it reads QFKSIALIGGGTGITPLYQLLREITSNPEDKTKVSL.

It belongs to the flavoprotein pyridine nucleotide cytochrome reductase family. Requires FAD as cofactor.

It localises to the mitochondrion outer membrane. It catalyses the reaction 2 Fe(III)-[cytochrome b5] + NADH = 2 Fe(II)-[cytochrome b5] + NAD(+) + H(+). Its function is as follows. May mediate the reduction of outer membrane cytochrome b5. This is NADH-cytochrome b5 reductase 2 (MCR1) from Lodderomyces elongisporus (strain ATCC 11503 / CBS 2605 / JCM 1781 / NBRC 1676 / NRRL YB-4239) (Yeast).